A 338-amino-acid chain; its full sequence is Phosphate acyltransferase (338 aa).

The protein belongs to the PlsX family. Homodimer. Probably interacts with PlsY.

It is found in the cytoplasm. The enzyme catalyses a fatty acyl-[ACP] + phosphate = an acyl phosphate + holo-[ACP]. The protein operates within lipid metabolism; phospholipid metabolism. Catalyzes the reversible formation of acyl-phosphate (acyl-PO(4)) from acyl-[acyl-carrier-protein] (acyl-ACP). This enzyme utilizes acyl-ACP as fatty acyl donor, but not acyl-CoA. The chain is Phosphate acyltransferase from Mannheimia succiniciproducens (strain KCTC 0769BP / MBEL55E).